We begin with the raw amino-acid sequence, 612 residues long: DNA mismatch repair protein MutL (612 aa).

It belongs to the DNA mismatch repair MutL/HexB family.

Functionally, this protein is involved in the repair of mismatches in DNA. It is required for dam-dependent methyl-directed DNA mismatch repair. May act as a 'molecular matchmaker', a protein that promotes the formation of a stable complex between two or more DNA-binding proteins in an ATP-dependent manner without itself being part of a final effector complex. This is DNA mismatch repair protein MutL from Bartonella quintana (strain Toulouse) (Rochalimaea quintana).